The chain runs to 460 residues: Nuclear transport factor 2 (460 aa).

The NTF2 domain maps to 15-131 (VGRAFVEQYY…YFVLNDVFRF (117 aa)). Disordered regions lie at residues 207 to 226 (EPPT…GDAP), 238 to 289 (KSSP…VDVE), and 361 to 460 (RQAV…GGSS). The region spanning 293–370 (HSIYVRNLPF…RQAVVEEKKT (78 aa)) is the RRM domain. The span at 373–382 (RGGGNNGGSR) shows a compositional bias: gly residues. Low complexity predominate over residues 383–394 (GRYFSGRGSFRN). Composition is skewed to gly residues over residues 399 to 416 (GGRG…GGEF) and 450 to 460 (GRGGARGGGSS).

As to quaternary structure, interacts with MBD6.

The protein localises to the cytoplasm. Its subcellular location is the nucleus. Its function is as follows. Involved in RNA-directed DNA methylation (RdDM). The polypeptide is Nuclear transport factor 2 (Arabidopsis thaliana (Mouse-ear cress)).